The following is a 160-amino-acid chain: uncharacterized protein (160 aa).

This is an uncharacterized protein from Methanocaldococcus jannaschii (strain ATCC 43067 / DSM 2661 / JAL-1 / JCM 10045 / NBRC 100440) (Methanococcus jannaschii).